Consider the following 193-residue polypeptide: Adenine phosphoribosyltransferase (193 aa).

This sequence belongs to the purine/pyrimidine phosphoribosyltransferase family. As to quaternary structure, homodimer.

Its subcellular location is the cytoplasm. The catalysed reaction is AMP + diphosphate = 5-phospho-alpha-D-ribose 1-diphosphate + adenine. It participates in purine metabolism; AMP biosynthesis via salvage pathway; AMP from adenine: step 1/1. Catalyzes a salvage reaction resulting in the formation of AMP, that is energically less costly than de novo synthesis. In Bifidobacterium longum subsp. infantis (strain ATCC 15697 / DSM 20088 / JCM 1222 / NCTC 11817 / S12), this protein is Adenine phosphoribosyltransferase.